We begin with the raw amino-acid sequence, 266 residues long: 5'-nucleotidase SurE (266 aa).

A divalent metal cation contacts are provided by D8, D9, S39, and N93.

The protein belongs to the SurE nucleotidase family. The cofactor is a divalent metal cation.

It localises to the cytoplasm. The enzyme catalyses a ribonucleoside 5'-phosphate + H2O = a ribonucleoside + phosphate. Nucleotidase that shows phosphatase activity on nucleoside 5'-monophosphates. The protein is 5'-nucleotidase SurE of Thermococcus gammatolerans (strain DSM 15229 / JCM 11827 / EJ3).